Consider the following 172-residue polypeptide: Large ribosomal subunit protein uL10 (172 aa).

It belongs to the universal ribosomal protein uL10 family. As to quaternary structure, part of the ribosomal stalk of the 50S ribosomal subunit. The N-terminus interacts with L11 and the large rRNA to form the base of the stalk. The C-terminus forms an elongated spine to which L12 dimers bind in a sequential fashion forming a multimeric L10(L12)X complex.

Functionally, forms part of the ribosomal stalk, playing a central role in the interaction of the ribosome with GTP-bound translation factors. This Rhodopseudomonas palustris (strain TIE-1) protein is Large ribosomal subunit protein uL10.